A 337-amino-acid chain; its full sequence is DNA replication regulator sld2 (337 aa).

A phosphothreonine; by cdc2 mark is found at Thr60 and Thr74. Residues Lys71–Gln97 form a disordered region. A Phosphoserine; by cdc2 modification is found at Ser87. A phosphothreonine; by cdc2 mark is found at Thr99 and Thr154. Residue Ser183 is modified to Phosphoserine. A disordered region spans residues Ser258 to Arg302. Residues Pro270–Asp285 show a composition bias toward acidic residues.

This sequence belongs to the SLD2 family. As to quaternary structure, interacts with rad4. Post-translationally, phosphorylated by cdc2 at the onset of S-phase.

It is found in the cytoplasm. The protein resides in the nucleus. Functionally, has a role in the initiation of DNA replication. Required at S-phase checkpoint. The polypeptide is DNA replication regulator sld2 (drc1) (Schizosaccharomyces pombe (strain 972 / ATCC 24843) (Fission yeast)).